Consider the following 579-residue polypeptide: uncharacterized protein (579 aa).

12 helical membrane passes run 20–40 (ALWA…VVAI), 54–74 (ATVV…MLVA), 86–106 (LYLI…LSSG), 142–162 (GVAL…GPLA), 174–194 (WIFF…AYLI), 204–224 (FDWF…FGLQ), 234–254 (WIWA…YWQA), 279–299 (IAII…YAQA), 310–330 (VLFA…GMII), 335–355 (PLCV…WLLC), 366–386 (LVLP…PLTV), and 467–487 (MLLP…LVDF). The disordered stretch occupies residues 516–579 (REPEEDCDTQ…DTESTAPSAL (64 aa)). Positions 526–540 (PLRASRPAAAAASRS) are enriched in low complexity. Polar residues predominate over residues 570-579 (DTESTAPSAL).

Belongs to the major facilitator superfamily. EmrB family.

It localises to the cell membrane. This is an uncharacterized protein from Mycobacterium tuberculosis (strain ATCC 25618 / H37Rv).